A 374-amino-acid polypeptide reads, in one-letter code: MFTRRAALVGAAALASAPLVIRTAGAEEAPAQLASAAPVDLSNLPRVKHTLVPPPFAHAHEQVAASGPVINEFEMRIIEKEVQLDEDAYLQAMTFDGSIPGPLMIVHEGDYVELTLINPPENTMPHNIDFHAATGALGGGGLTLINPGEKVVLRFKATRAGAFVYHCAPGGPMIPWHVVSGMAGCIMVLPRDGLKDHEGKPVRYDTVYYIGESDHYIPKDEDGTYMRFSDPSEGYEDMVAVMDTLIPSHIVFNGAVGALTGEGALKAKVGDNVLFVHSQPNRDSRPHLIGGHGDLVWETGKFHNAPERDLETWFIRGGSAGAALYKFLQPGVYAYVNHNLIEAVHKGATAHVLVEGEWDNDLMEQVVAPVGLTG.

A signal peptide (tat-type signal) is located at residues 1–31; sequence MFTRRAALVGAAALASAPLVIRTAGAEEAPA. Plastocyanin-like domains follow at residues 93–189 and 254–355; these read MTFD…IMVL and GAVG…VLVE. Residues H126, H131, H166, C167, H177, M182, and H338 each coordinate Cu cation.

It belongs to the multicopper oxidase family. In terms of assembly, homotrimer. Cu(2+) is required as a cofactor. Requires Cu(+) as cofactor. It depends on FAD as a cofactor. Predicted to be exported by the Tat system. The position of the signal peptide cleavage has not been experimentally proven.

The protein resides in the periplasm. The enzyme catalyses nitric oxide + Fe(III)-[cytochrome c] + H2O = Fe(II)-[cytochrome c] + nitrite + 2 H(+). The protein operates within nitrogen metabolism; nitrate reduction (denitrification); dinitrogen from nitrate: step 2/4. In Cereibacter sphaeroides (strain ATCC 17025 / ATH 2.4.3) (Rhodobacter sphaeroides), this protein is Copper-containing nitrite reductase (nirK).